The following is a 185-amino-acid chain: Ribosome-recycling factor (185 aa).

Belongs to the RRF family.

The protein localises to the cytoplasm. In terms of biological role, responsible for the release of ribosomes from messenger RNA at the termination of protein biosynthesis. May increase the efficiency of translation by recycling ribosomes from one round of translation to another. This chain is Ribosome-recycling factor, found in Geobacillus sp. (strain WCH70).